The following is a 158-amino-acid chain: Kalata-B3/B6 (158 aa).

The first 22 residues, 1–22 (MAKFTKSLVLCLLLAAFVGAFG), serve as a signal peptide directing secretion. The propeptide occupies 23–66 (AELSEADKANVVNEIAANIQREILKGVKSSETTLTMFLKEMQLK). The cyclopeptide (Gly-Asn) cross-link spans 67-96 (GLPTCGETCFGGTCNTPGCSCSSWPICTRN). 3 cysteine pairs are disulfide-bonded: Cys-71–Cys-85, Cys-75–Cys-87, and Cys-80–Cys-93. Residues 97–121 (GLPKRAGVKSSETTLTMFLKEMQLK) constitute a propeptide that is removed on maturation. A cross-link (cyclopeptide (Gly-Asp)) is located at residues 122–151 (GLPTCGETCFGGTCNTPGCTCDPWPICTRD). Cystine bridges form between Cys-126–Cys-140, Cys-130–Cys-142, and Cys-135–Cys-148. Residues 152 to 158 (GLPSAAA) constitute a propeptide that is removed on maturation.

Belongs to the cyclotide family. Moebius subfamily. In terms of processing, kalata-B3 and kalata-B6 are cyclic peptides.

Functionally, probably participates in a plant defense mechanism. Has hemolytic activity. This is Kalata-B3/B6 (OAK2) from Oldenlandia affinis.